Consider the following 439-residue polypeptide: Branched-chain amino acid permease BrnQ (439 aa).

Residues 1–9 (MTHQLKSRD) lie on the Cytoplasmic side of the membrane. The helical transmembrane segment at 10-30 (IIALGFMTFALFVGAGNIIFP) threads the bilayer. The Periplasmic segment spans residues 31–43 (PMVGLQAGEHVWT). A helical transmembrane segment spans residues 44 to 64 (AAIGFLITAVGLPVLTVVALA). Over 65–79 (KVGGGVDSLSTPIGK) the chain is Cytoplasmic. Residues 80–100 (VAGLLLATVCYLAVGPLFATP) form a helical membrane-spanning segment. Topologically, residues 101–118 (RTATVSFEVGIAPLTGDS) are periplasmic. Residues 119–139 (AMPLLIYSVVYFAIVILVSLY) form a helical membrane-spanning segment. The Cytoplasmic segment spans residues 140–149 (PGKLLDTVGN). A helical membrane pass occupies residues 150–170 (FLAPLKIIALVILSVAAIVWP). Residues 171-189 (AGPISNALDAYQNAAFSNG) are Periplasmic-facing. A helical membrane pass occupies residues 190 to 210 (FVNGYLTMDTLGAMVFGIVIV). Topologically, residues 211–226 (NAARSRGVTEARLLTR) are cytoplasmic. The helical transmembrane segment at 227 to 247 (YTVWAGLMAGVGLTLLYLALF) threads the bilayer. The Periplasmic portion of the chain corresponds to 248–277 (RLGSDSATLVDQSANGAAILHAYVQHTFGG). The helical transmembrane segment at 278–298 (AGSFLLAALIFIACLVTAVGL) threads the bilayer. Residues 299 to 316 (TCACAEFFAQYIPLSYRT) lie on the Cytoplasmic side of the membrane. The helical transmembrane segment at 317-337 (LVFILGGFSMVVSNLGLSHLI) threads the bilayer. A topological domain (periplasmic) is located at residue Gln338. Residues 339 to 359 (ISIPVLTAIYPPCIALVVLSF) traverse the membrane as a helical segment. Residues 360–369 (TRSWWHNSTR) lie on the Cytoplasmic side of the membrane. Residues 370–390 (IIAPAMFISLLFGILDGIKAS) traverse the membrane as a helical segment. The Periplasmic segment spans residues 391-404 (AFGDMLPAWSQRLP). Residues 405 to 425 (LAEQGLAWLMPTVVMVILAII) traverse the membrane as a helical segment. Residues 426 to 439 (WDRAAGRQVTSSAH) are Cytoplasmic-facing.

Belongs to the branched chain amino acid transporter family.

Its subcellular location is the cell inner membrane. Functionally, liv-II branched chain amino acid transport system, which transports leucine, valine and isoleucine. This Salmonella typhimurium (strain LT2 / SGSC1412 / ATCC 700720) protein is Branched-chain amino acid permease BrnQ.